The primary structure comprises 296 residues: Light-independent protochlorophyllide reductase iron-sulfur ATP-binding protein (296 aa).

ATP is bound by residues 39-44 (GIGKST) and K68. Mg(2+) is bound at residue S43. C124 and C158 together coordinate [4Fe-4S] cluster. 209–210 (NR) is an ATP binding site.

This sequence belongs to the NifH/BchL/ChlL family. In terms of assembly, homodimer. Protochlorophyllide reductase is composed of three subunits; ChlL, ChlN and ChlB. It depends on [4Fe-4S] cluster as a cofactor.

It carries out the reaction chlorophyllide a + oxidized 2[4Fe-4S]-[ferredoxin] + 2 ADP + 2 phosphate = protochlorophyllide a + reduced 2[4Fe-4S]-[ferredoxin] + 2 ATP + 2 H2O. It participates in porphyrin-containing compound metabolism; chlorophyll biosynthesis (light-independent). In terms of biological role, component of the dark-operative protochlorophyllide reductase (DPOR) that uses Mg-ATP and reduced ferredoxin to reduce ring D of protochlorophyllide (Pchlide) to form chlorophyllide a (Chlide). This reaction is light-independent. The L component serves as a unique electron donor to the NB-component of the complex, and binds Mg-ATP. The sequence is that of Light-independent protochlorophyllide reductase iron-sulfur ATP-binding protein from Prochlorococcus marinus (strain MIT 9303).